We begin with the raw amino-acid sequence, 546 residues long: Arginine--tRNA ligase (546 aa).

Residues 117-127 (ANPTGPLHIGR) carry the 'HIGH' region motif.

It belongs to the class-I aminoacyl-tRNA synthetase family.

It localises to the cytoplasm. It carries out the reaction tRNA(Arg) + L-arginine + ATP = L-arginyl-tRNA(Arg) + AMP + diphosphate. This chain is Arginine--tRNA ligase, found in Thermoplasma acidophilum (strain ATCC 25905 / DSM 1728 / JCM 9062 / NBRC 15155 / AMRC-C165).